Here is a 271-residue protein sequence, read N- to C-terminus: Thiosulfate sulfurtransferase (271 aa).

2 Rhodanese domains span residues 21–129 and 159–270; these read SAPE…PLSR and GAAD…TPVE. The Cysteine persulfide intermediate role is filled by Cys230. Arg235 is a binding site for substrate.

Its subcellular location is the cytoplasm. The catalysed reaction is thiosulfate + hydrogen cyanide = thiocyanate + sulfite + 2 H(+). This chain is Thiosulfate sulfurtransferase (rhdA), found in Azotobacter vinelandii.